The primary structure comprises 387 residues: MVSDGEFTRTQIFGTVFEITNRYTDLNPVGMGAFGLVCSAIDKLTGQNVAVKKIMKPFSTSVLAKRTYRELKLLKHLRHENLITLDDIFLSPLEDIYFVTELQGTDLHRLLTSRPLEKQFIQYFTYQILRGLKYVHSAGVIHRDLKPSNILINENCDLKICDFGLARIQDPQMTGYVSTRYYRAPEIMLTWQKYDTEVDLWSVGCILSEMIEGKPLFPGKDHVHQFSIITELLGSPPPDVIETICSENTLRFVQSLPHRDPIPFSERFAQCSHVEPEAIDLLAKMLIFDPKKRISALDALSHPYMEPYHDPTDEPVCEVKFDWSFNDADLPVDTWRVMMYSEILDFHQIIGAGANGTTQEQMAQIQQEGIQAPSSQYQQTNQEQKVE.

Positions 23 to 305 constitute a Protein kinase domain; the sequence is YTDLNPVGMG…ALDALSHPYM (283 aa). Residues 29-37 and Lys-52 each bind ATP; that span reads VGMGAFGLV. Catalysis depends on Asp-144, which acts as the Proton acceptor. Thr-174 is subject to Phosphothreonine. The short motif at 174–176 is the TXY element; that stretch reads TGY. A Phosphotyrosine modification is found at Tyr-176. The interval 360-387 is disordered; sequence EQMAQIQQEGIQAPSSQYQQTNQEQKVE.

Belongs to the protein kinase superfamily. Ser/Thr protein kinase family. MAP kinase subfamily. HOG1 sub-subfamily. It depends on Mg(2+) as a cofactor. In terms of processing, dually phosphorylated on Thr-174 and Tyr-176, which activates the enzyme. Phosphorylated in response of osmotic stress, oxidative stress and UV stress, but not heat stress.

It is found in the cytoplasm. It localises to the nucleus. It carries out the reaction L-seryl-[protein] + ATP = O-phospho-L-seryl-[protein] + ADP + H(+). It catalyses the reaction L-threonyl-[protein] + ATP = O-phospho-L-threonyl-[protein] + ADP + H(+). With respect to regulation, activated by tyrosine and threonine phosphorylation. Functionally, proline-directed serine/threonine-protein kinase involved in a signal transduction pathway that is activated by changes in the osmolarity of the extracellular environment. Controls osmotic regulation of transcription of target genes. The chain is Mitogen-activated protein kinase HOG1 (HOG1) from Debaryomyces hansenii (strain ATCC 36239 / CBS 767 / BCRC 21394 / JCM 1990 / NBRC 0083 / IGC 2968) (Yeast).